The primary structure comprises 265 residues: Neuronal membrane glycoprotein M6-b (265 aa).

Residues 31-51 (GGVPYASLVATILCFSGVALF) form a helical membrane-spanning segment. A glycan (N-linked (GlcNAc...) asparagine) is linked at Asn73. 2 consecutive transmembrane segments (helical) span residues 90 to 110 (VIYG…AEGF) and 136 to 156 (FVFL…FSAV). N-linked (GlcNAc...) asparagine glycosylation is present at Asn177. A helical membrane pass occupies residues 224-244 (LFIVACAGAGATVIALLIYMM). Ser257 carries the phosphoserine modification.

It belongs to the myelin proteolipid protein family. Interacts with SERT.

Its subcellular location is the membrane. The protein localises to the cell membrane. In terms of biological role, may be involved in neural development. Involved in regulation of osteoblast function and bone formation. Involved in matrix vesicle release by osteoblasts; this function seems to involve maintenance of the actin cytoskeleton. May be involved in cellular trafficking of SERT and thereby in regulation of serotonin uptake. The chain is Neuronal membrane glycoprotein M6-b (GPM6B) from Pongo abelii (Sumatran orangutan).